The primary structure comprises 458 residues: Jacalin-related lectin 22 (458 aa).

Jacalin-type lectin domains follow at residues 5-153 (YRKL…YFVL), 160-301 (LYKL…YFGP), and 311-453 (SKKL…TIVP).

Belongs to the jacalin lectin family. Component of the PYK10 complex, at least composed of PYK10/BGLU23, BGLU21, BGLU22, JAL22, JAL23, PBP1/JAL30, PBP2/JAL31, JAL32, JAL33, JAL34, JAL35, GLL22 and GLL23.

In terms of biological role, inhibitor-type lectin that may regulate the correct polymerization and activation of BGLU23/PYK10 upon tissue damage. This chain is Jacalin-related lectin 22 (JAL22), found in Arabidopsis thaliana (Mouse-ear cress).